The chain runs to 353 residues: Protein RecA (353 aa).

Residue 67–74 (GPESSGKT) participates in ATP binding. The interval 330 to 353 (SNPNSTPDFSVDDSEGVAETNEDF) is disordered. Residues 339–353 (SVDDSEGVAETNEDF) are compositionally biased toward acidic residues.

The protein belongs to the RecA family.

It localises to the cytoplasm. Can catalyze the hydrolysis of ATP in the presence of single-stranded DNA, the ATP-dependent uptake of single-stranded DNA by duplex DNA, and the ATP-dependent hybridization of homologous single-stranded DNAs. It interacts with LexA causing its activation and leading to its autocatalytic cleavage. This chain is Protein RecA, found in Escherichia coli O157:H7 (strain EC4115 / EHEC).